The primary structure comprises 652 residues: DNA ligase (652 aa).

NAD(+) contacts are provided by residues aspartate 29–aspartate 33, serine 78–leucine 79, and glutamate 107. Catalysis depends on lysine 109, which acts as the N6-AMP-lysine intermediate. NAD(+)-binding residues include arginine 130, glutamate 164, lysine 278, and lysine 302. Residues cysteine 395, cysteine 398, cysteine 413, and cysteine 418 each coordinate Zn(2+). In terms of domain architecture, BRCT spans valine 577–leucine 652.

This sequence belongs to the NAD-dependent DNA ligase family. LigA subfamily. Requires Mg(2+) as cofactor. Mn(2+) serves as cofactor.

It carries out the reaction NAD(+) + (deoxyribonucleotide)n-3'-hydroxyl + 5'-phospho-(deoxyribonucleotide)m = (deoxyribonucleotide)n+m + AMP + beta-nicotinamide D-nucleotide.. In terms of biological role, DNA ligase that catalyzes the formation of phosphodiester linkages between 5'-phosphoryl and 3'-hydroxyl groups in double-stranded DNA using NAD as a coenzyme and as the energy source for the reaction. It is essential for DNA replication and repair of damaged DNA. This Streptococcus pneumoniae (strain 70585) protein is DNA ligase.